The following is a 470-amino-acid chain: Neuraminidase (470 aa).

The Intravirion portion of the chain corresponds to 1 to 14 (MNPNQKIITIGSVS). Residues 11–32 (GSVSLGLVVLNILLHIVSITIT) form an involved in apical transport and lipid raft association region. The chain crosses the membrane as a helical span at residues 15–35 (LGLVVLNILLHIVSITITVLV). Residues 32–86 (TVLVLPGNGNNGSCNGTVIREYNETVRIEKVTQWHNTNVIEYIERSESDHFMNNT) form a hypervariable stalk region region. Residues 36–470 (LPGNGNNGSC…AILPFDIDKM (435 aa)) lie on the Virion surface side of the membrane. Residues N42, N46, N54, and N84 are each glycosylated (N-linked (GlcNAc...) asparagine; by host). The tract at residues 89 to 470 (LCDAKGFAPF…AILPFDIDKM (382 aa)) is head of neuraminidase. Cystine bridges form between C90–C417, C122–C127, C182–C229, C231–C236, C277–C290, C279–C288, C316–C335, and C421–C446. A substrate-binding site is contributed by R116. N144 carries an N-linked (GlcNAc...) asparagine; by host glycan. The Proton donor/acceptor role is filled by D149. Substrate is bound at residue R150. Position 275-276 (275-276 (EE)) interacts with substrate. R291 lines the substrate pocket. D292 lines the Ca(2+) pocket. N293 carries an N-linked (GlcNAc...) asparagine; by host glycan. G296 and D322 together coordinate Ca(2+). Residue R368 coordinates substrate. N-linked (GlcNAc...) asparagine; by host glycosylation is present at N398. Y402 acts as the Nucleophile in catalysis.

It belongs to the glycosyl hydrolase 34 family. Homotetramer. Requires Ca(2+) as cofactor. Post-translationally, N-glycosylated.

The protein resides in the virion membrane. It is found in the host apical cell membrane. The enzyme catalyses Hydrolysis of alpha-(2-&gt;3)-, alpha-(2-&gt;6)-, alpha-(2-&gt;8)- glycosidic linkages of terminal sialic acid residues in oligosaccharides, glycoproteins, glycolipids, colominic acid and synthetic substrates.. Inhibited by the neuraminidase inhibitors zanamivir (Relenza) and oseltamivir (Tamiflu). These drugs interfere with the release of progeny virus from infected cells and are effective against all influenza strains. Resistance to neuraminidase inhibitors is quite rare. Its function is as follows. Catalyzes the removal of terminal sialic acid residues from viral and cellular glycoconjugates. Cleaves off the terminal sialic acids on the glycosylated HA during virus budding to facilitate virus release. Additionally helps virus spread through the circulation by further removing sialic acids from the cell surface. These cleavages prevent self-aggregation and ensure the efficient spread of the progeny virus from cell to cell. Otherwise, infection would be limited to one round of replication. Described as a receptor-destroying enzyme because it cleaves a terminal sialic acid from the cellular receptors. May facilitate viral invasion of the upper airways by cleaving the sialic acid moieties on the mucin of the airway epithelial cells. Likely to plays a role in the budding process through its association with lipid rafts during intracellular transport. May additionally display a raft-association independent effect on budding. Plays a role in the determination of host range restriction on replication and virulence. Sialidase activity in late endosome/lysosome traffic seems to enhance virus replication. This Aves (Horse) protein is Neuraminidase.